Consider the following 199-residue polypeptide: ATP-dependent Clp protease proteolytic subunit (199 aa).

Serine 97 serves as the catalytic Nucleophile. Histidine 122 is a catalytic residue.

The protein belongs to the peptidase S14 family. Fourteen ClpP subunits assemble into 2 heptameric rings which stack back to back to give a disk-like structure with a central cavity, resembling the structure of eukaryotic proteasomes.

It is found in the cytoplasm. The catalysed reaction is Hydrolysis of proteins to small peptides in the presence of ATP and magnesium. alpha-casein is the usual test substrate. In the absence of ATP, only oligopeptides shorter than five residues are hydrolyzed (such as succinyl-Leu-Tyr-|-NHMec, and Leu-Tyr-Leu-|-Tyr-Trp, in which cleavage of the -Tyr-|-Leu- and -Tyr-|-Trp bonds also occurs).. In terms of biological role, cleaves peptides in various proteins in a process that requires ATP hydrolysis. Has a chymotrypsin-like activity. Plays a major role in the degradation of misfolded proteins. This is ATP-dependent Clp protease proteolytic subunit from Geobacter sulfurreducens (strain ATCC 51573 / DSM 12127 / PCA).